The sequence spans 346 residues: Putative aminopeptidase YhfE (346 aa).

A divalent metal cation is bound by residues His68 and Asp185. Residue Glu219 is the Proton acceptor of the active site. Positions 220, 240, and 320 each coordinate a divalent metal cation.

Belongs to the peptidase M42 family. Requires a divalent metal cation as cofactor.

This is Putative aminopeptidase YhfE (yhfE) from Bacillus subtilis (strain 168).